The primary structure comprises 181 residues: Photosystem I assembly protein Ycf4 (181 aa).

The next 2 helical transmembrane spans lie at 19 to 41 (YAWC…GSYF) and 61 to 83 (IVMM…SIFT).

It belongs to the Ycf4 family.

Its subcellular location is the plastid. It localises to the chloroplast thylakoid membrane. Its function is as follows. Seems to be required for the assembly of the photosystem I complex. In Guillardia theta (Cryptophyte), this protein is Photosystem I assembly protein Ycf4.